A 675-amino-acid polypeptide reads, in one-letter code: UvrABC system protein B (675 aa).

The Helicase ATP-binding domain maps to 35 to 422 (EGVSDGLMFQ…ADNVVEQVVR (388 aa)). An ATP-binding site is contributed by 48–55 (GVTGSGKT). A Beta-hairpin motif is present at residues 101 to 124 (YYDYYQPEAYVPTRDLFIEKDSSI). Positions 439–605 (QVDDLLGEIH…GVSKAVRELI (167 aa)) constitute a Helicase C-terminal domain. In terms of domain architecture, UVR spans 633–668 (AREIRRLEKLMMDHARNLEFEQAAAARDALNALKSR).

The protein belongs to the UvrB family. As to quaternary structure, forms a heterotetramer with UvrA during the search for lesions. Interacts with UvrC in an incision complex.

The protein resides in the cytoplasm. The UvrABC repair system catalyzes the recognition and processing of DNA lesions. A damage recognition complex composed of 2 UvrA and 2 UvrB subunits scans DNA for abnormalities. Upon binding of the UvrA(2)B(2) complex to a putative damaged site, the DNA wraps around one UvrB monomer. DNA wrap is dependent on ATP binding by UvrB and probably causes local melting of the DNA helix, facilitating insertion of UvrB beta-hairpin between the DNA strands. Then UvrB probes one DNA strand for the presence of a lesion. If a lesion is found the UvrA subunits dissociate and the UvrB-DNA preincision complex is formed. This complex is subsequently bound by UvrC and the second UvrB is released. If no lesion is found, the DNA wraps around the other UvrB subunit that will check the other stand for damage. In Bordetella bronchiseptica (strain ATCC BAA-588 / NCTC 13252 / RB50) (Alcaligenes bronchisepticus), this protein is UvrABC system protein B.